The following is a 151-amino-acid chain: Myosin light polypeptide 6 (151 aa).

The residue at position 2 (Cys2) is an N-acetylcysteine. The region spanning 7-42 (DQTAEFKEAFQLFDRTGDGKILYSQCGDVMRALGQN) is the EF-hand 1 domain. Phosphoserine is present on Ser57. Lys81 bears the N6-acetyllysine mark. The 36-residue stretch at 84–119 (GTYEDYVEGLRVFDKEGNGTVMGAEIRHVLVTLGEK) folds into the EF-hand 2 domain.

As to quaternary structure, myosin is a hexamer of 2 heavy chains and 4 light chains. Interacts with SPATA6.

In terms of biological role, regulatory light chain of myosin. Does not bind calcium. The sequence is that of Myosin light polypeptide 6 (MYL6) from Bos taurus (Bovine).